We begin with the raw amino-acid sequence, 238 residues long: Serine protease SplE (238 aa).

A signal peptide spans Met1–Ala36. Catalysis depends on charge relay system residues His75, Asp113, and Ser191.

It belongs to the peptidase S1B family.

It is found in the secreted. This Staphylococcus aureus protein is Serine protease SplE (splE).